The sequence spans 261 residues: Carbonic anhydrase 1 (261 aa).

Alanine 2 bears the N-acetylalanine mark. An Alpha-carbonic anhydrase domain is found at 4–261 (SDWGYDSPNG…LKGRTVRAFF (258 aa)). Histidine 65 functions as the Proton donor/acceptor in the catalytic mechanism. Zn(2+) is bound by residues histidine 95, histidine 97, and histidine 120. Substrate is bound by residues threonine 200 and 200–201 (TH).

This sequence belongs to the alpha-carbonic anhydrase family. It depends on Zn(2+) as a cofactor.

It is found in the cytoplasm. The enzyme catalyses hydrogencarbonate + H(+) = CO2 + H2O. It catalyses the reaction urea = cyanamide + H2O. Inhibited by acetazolamide. In terms of biological role, catalyzes the reversible hydration of carbon dioxide. Can hydrate cyanamide to urea. The chain is Carbonic anhydrase 1 (CA1) from Equus caballus (Horse).